The chain runs to 407 residues: Serine/threonine transporter SstT (407 aa).

Helical transmembrane passes span 12-32 (GNLI…GISS), 42-62 (LGIL…FILI), 81-101 (IIIL…LANF), 141-161 (ALSS…GIAL), 179-199 (VLKI…GLVA), 218-238 (ILLV…IVFF), 245-267 (FPLI…SSAA), 288-308 (ISIP…IAIL), and 330-350 (IIAT…LLLI).

It belongs to the dicarboxylate/amino acid:cation symporter (DAACS) (TC 2.A.23) family.

Its subcellular location is the cell inner membrane. The catalysed reaction is L-serine(in) + Na(+)(in) = L-serine(out) + Na(+)(out). The enzyme catalyses L-threonine(in) + Na(+)(in) = L-threonine(out) + Na(+)(out). Its function is as follows. Involved in the import of serine and threonine into the cell, with the concomitant import of sodium (symport system). The protein is Serine/threonine transporter SstT of Campylobacter jejuni subsp. jejuni serotype O:6 (strain 81116 / NCTC 11828).